The chain runs to 421 residues: Zinc finger protein 584 (421 aa).

A KRAB domain is found at 17–88 (VMFEDVTVYF…SWVDVTPVSR (72 aa)). Basic and acidic residues predominate over residues 120 to 129 (QHQDTHSEGK). The tract at residues 120 to 146 (QHQDTHSEGKPRRHTEHGAAFPPGSSC) is disordered. 8 C2H2-type zinc fingers span residues 159–181 (FKCS…LITH), 214–236 (HVCN…QKVH), 242–264 (FKCS…QRIH), 270–292 (YECS…RKVH), 298–320 (YECT…QRVH), 326–348 (FECK…WKVH), 354–376 (YECS…QQFH), and 382–404 (YECT…KKVH). The segment at 402-421 (KVHTPERRQEDRAHGKVVSC) is disordered. Residues 404–415 (HTPERRQEDRAH) show a composition bias toward basic and acidic residues.

Belongs to the krueppel C2H2-type zinc-finger protein family.

Its subcellular location is the nucleus. May be involved in transcriptional regulation. This is Zinc finger protein 584 (ZNF584) from Homo sapiens (Human).